Consider the following 198-residue polypeptide: Transcription factor elt-7 (198 aa).

Positions 1–18 (MLPETTTLQPLPSVTTIM) are enriched in polar residues. Residues 1–20 (MLPETTTLQPLPSVTTIMNE) form a disordered region. The segment at 143–167 (CSHCSTTTTTLWRKNDEGNLECNAC) adopts a GATA-type zinc-finger fold.

The protein resides in the nucleus. Functionally, transcriptional activator that binds to the consensus sequence 5'-[AT]GATA[AG]-3'. Required for gut-specific differentiation, specifically acting with the GATA region-binding transcription factor elt-2 to control normal gene expression and promote normal formation of the intestine. May have a protective role in response to infection by Gram-negative bacteria such as P.aeruginosa. The sequence is that of Transcription factor elt-7 from Caenorhabditis elegans.